The primary structure comprises 510 residues: 2-isopropylmalate synthase (510 aa).

Residues 5–267 (LIIFDTTLRD…DTRIDSVHIV (263 aa)) enclose the Pyruvate carboxyltransferase domain. The Mn(2+) site is built by aspartate 14, histidine 202, histidine 204, and asparagine 238. The tract at residues 392–510 (KLLSLTAHSE…SKLERAHPQV (119 aa)) is regulatory domain.

This sequence belongs to the alpha-IPM synthase/homocitrate synthase family. LeuA type 1 subfamily. As to quaternary structure, homodimer. Mn(2+) is required as a cofactor.

Its subcellular location is the cytoplasm. The catalysed reaction is 3-methyl-2-oxobutanoate + acetyl-CoA + H2O = (2S)-2-isopropylmalate + CoA + H(+). The protein operates within amino-acid biosynthesis; L-leucine biosynthesis; L-leucine from 3-methyl-2-oxobutanoate: step 1/4. Functionally, catalyzes the condensation of the acetyl group of acetyl-CoA with 3-methyl-2-oxobutanoate (2-ketoisovalerate) to form 3-carboxy-3-hydroxy-4-methylpentanoate (2-isopropylmalate). The polypeptide is 2-isopropylmalate synthase (Nitrosospira multiformis (strain ATCC 25196 / NCIMB 11849 / C 71)).